The chain runs to 236 residues: Small ribosomal subunit protein uS3 (236 aa).

A KH type-2 domain is found at Ile-39–Arg-107. The segment at Ala-214–Ala-236 is disordered.

Belongs to the universal ribosomal protein uS3 family. As to quaternary structure, part of the 30S ribosomal subunit. Forms a tight complex with proteins S10 and S14.

Functionally, binds the lower part of the 30S subunit head. Binds mRNA in the 70S ribosome, positioning it for translation. This chain is Small ribosomal subunit protein uS3, found in Brucella abortus (strain S19).